We begin with the raw amino-acid sequence, 96 residues long: MSRVCELTGVSVQSGHNVSHSQRKTKRKFLPNLQNVSLFSDSLKKAFKFKVVARAIRTLDKVGGLDCYLLSASDKILSKFAIEVKKIIKNNGSKSS.

It belongs to the bacterial ribosomal protein bL28 family.

This is Large ribosomal subunit protein bL28 from Orientia tsutsugamushi (strain Boryong) (Rickettsia tsutsugamushi).